A 225-amino-acid chain; its full sequence is MVGMDIAKYIDHTNLKPYATKEDIIKLCDEAIQYGFYAVCVNPYRVKLAKEYLSEKKADVKVASVIGFPLGATPTEVKVFEARKALEDGADELDMVINIGALKDGDYDYVKRDIEEVVKVAHEKGAKVKVIIETCYLTEEEKIKACELAKEAGADFVKTSTGFGTGGATVEDVRLMRKVVGPEMGVKAAGGIRTYEQALAMIEAGANRIGTSSGVRIVEGARNAE.

Residue Asp-94 is the Proton donor/acceptor of the active site. Residue Lys-158 is the Schiff-base intermediate with acetaldehyde of the active site. Catalysis depends on Lys-187, which acts as the Proton donor/acceptor.

This sequence belongs to the DeoC/FbaB aldolase family. DeoC type 1 subfamily.

The protein resides in the cytoplasm. The catalysed reaction is 2-deoxy-D-ribose 5-phosphate = D-glyceraldehyde 3-phosphate + acetaldehyde. Its pathway is carbohydrate degradation; 2-deoxy-D-ribose 1-phosphate degradation; D-glyceraldehyde 3-phosphate and acetaldehyde from 2-deoxy-alpha-D-ribose 1-phosphate: step 2/2. In terms of biological role, catalyzes a reversible aldol reaction between acetaldehyde and D-glyceraldehyde 3-phosphate to generate 2-deoxy-D-ribose 5-phosphate. This is Deoxyribose-phosphate aldolase from Thermococcus gammatolerans (strain DSM 15229 / JCM 11827 / EJ3).